A 252-amino-acid chain; its full sequence is Probable transcriptional regulatory protein TW504 (252 aa).

The protein belongs to the TACO1 family.

It is found in the cytoplasm. The sequence is that of Probable transcriptional regulatory protein TW504 from Tropheryma whipplei (strain TW08/27) (Whipple's bacillus).